Reading from the N-terminus, the 43-residue chain is Protein PsbN (43 aa).

Residues 4–24 (ATVLSITFAVILIAITGLAVY) form a helical membrane-spanning segment.

Belongs to the PsbN family.

Its subcellular location is the cellular thylakoid membrane. May play a role in photosystem I and II biogenesis. The chain is Protein PsbN from Synechocystis sp. (strain ATCC 27184 / PCC 6803 / Kazusa).